The following is a 538-amino-acid chain: Bifunctional purine biosynthesis protein PurH (538 aa).

Residues 6-158 form the MGS-like domain; the sequence is KHIPAPDLHR…KNHAYVATVV (153 aa).

This sequence belongs to the PurH family.

It carries out the reaction (6R)-10-formyltetrahydrofolate + 5-amino-1-(5-phospho-beta-D-ribosyl)imidazole-4-carboxamide = 5-formamido-1-(5-phospho-D-ribosyl)imidazole-4-carboxamide + (6S)-5,6,7,8-tetrahydrofolate. The catalysed reaction is IMP + H2O = 5-formamido-1-(5-phospho-D-ribosyl)imidazole-4-carboxamide. It functions in the pathway purine metabolism; IMP biosynthesis via de novo pathway; 5-formamido-1-(5-phospho-D-ribosyl)imidazole-4-carboxamide from 5-amino-1-(5-phospho-D-ribosyl)imidazole-4-carboxamide (10-formyl THF route): step 1/1. It participates in purine metabolism; IMP biosynthesis via de novo pathway; IMP from 5-formamido-1-(5-phospho-D-ribosyl)imidazole-4-carboxamide: step 1/1. In Brucella anthropi (strain ATCC 49188 / DSM 6882 / CCUG 24695 / JCM 21032 / LMG 3331 / NBRC 15819 / NCTC 12168 / Alc 37) (Ochrobactrum anthropi), this protein is Bifunctional purine biosynthesis protein PurH.